The primary structure comprises 191 residues: Fe/S biogenesis protein NfuA (191 aa).

2 residues coordinate [4Fe-4S] cluster: Cys-149 and Cys-152.

It belongs to the NfuA family. Homodimer. [4Fe-4S] cluster serves as cofactor.

Its function is as follows. Involved in iron-sulfur cluster biogenesis. Binds a 4Fe-4S cluster, can transfer this cluster to apoproteins, and thereby intervenes in the maturation of Fe/S proteins. Could also act as a scaffold/chaperone for damaged Fe/S proteins. In Salmonella choleraesuis (strain SC-B67), this protein is Fe/S biogenesis protein NfuA.